The chain runs to 369 residues: Velvet complex subunit B (369 aa).

Disordered stretches follow at residues 1-54 (MYAV…STVH), 138-174 (SISTAMSSSYPPPPHPTSSDYPASYQTNPYGQPVGQP), and 346-369 (KDGVKGQGSRGRHSDEDDGLDNEY). Positions 13–27 (HPPPLSMDRIPPPST) are enriched in pro residues. Residues 53-345 (VHDGRIWSLQ…ANQGIKIPIR (293 aa)) enclose the Velvet domain.

The protein belongs to the velvet family. VelB subfamily. Component of the heterotrimeric velvet complex composed of laeA, veA and velB; VeA acting as a bridging protein between laeA and velB. Interacts directly with veA. Forms a heterodimeric complex with vosA; the formation of the velB-vosA complex is light-dependent.

Its subcellular location is the nucleus. The protein localises to the cytoplasm. Its function is as follows. Component of the velvet transcription factor complex that controls sexual/asexual developmental ratio in response to light, promoting sexual development in the darkness while stimulating asexual sporulation under illumination. The velvet complex acts as a global regulator for secondary metabolite gene expression. Component of the velB-VosA heterodimeric complex that plays a dual role in activating genes associated with spore maturation and repressing certain development-associated genes. The velB-VosA complex binds DNA through the DNA-binding domain of vosA that recognizes an 11-nucleotide consensus sequence 5'-CTGGCCGCGGC-3' consisting of two motifs in the promoters of key developmental regulatory genes. The vosA-velB complex binds to the beta-glucan synthase fksA gene promoter in asexual spores for repression. The chain is Velvet complex subunit B from Emericella nidulans (strain FGSC A4 / ATCC 38163 / CBS 112.46 / NRRL 194 / M139) (Aspergillus nidulans).